Here is a 285-residue protein sequence, read N- to C-terminus: Diaminopimelate epimerase (285 aa).

Substrate contacts are provided by Asn-15 and Asn-68. Cys-77 serves as the catalytic Proton donor. Residues Gly-78–Asn-79, Asn-165, Asn-201, and Glu-219–Arg-220 contribute to the substrate site. Cys-228 functions as the Proton acceptor in the catalytic mechanism. Residue Gly-229–Thr-230 coordinates substrate.

It belongs to the diaminopimelate epimerase family. As to quaternary structure, homodimer.

Its subcellular location is the cytoplasm. It carries out the reaction (2S,6S)-2,6-diaminopimelate = meso-2,6-diaminopimelate. Its pathway is amino-acid biosynthesis; L-lysine biosynthesis via DAP pathway; DL-2,6-diaminopimelate from LL-2,6-diaminopimelate: step 1/1. In terms of biological role, catalyzes the stereoinversion of LL-2,6-diaminopimelate (L,L-DAP) to meso-diaminopimelate (meso-DAP), a precursor of L-lysine and an essential component of the bacterial peptidoglycan. In Synechococcus sp. (strain JA-3-3Ab) (Cyanobacteria bacterium Yellowstone A-Prime), this protein is Diaminopimelate epimerase.